Consider the following 775-residue polypeptide: ADP-ribosylation factor GTPase-activating protein AGD4 (775 aa).

One can recognise a BAR domain in the interval 2-226 (ATFINLEDSP…IHQILTYAQQ (225 aa)). The 134-residue stretch at 288–421 (EVIKQGYLLK…WVNKITKAIG (134 aa)) folds into the PH domain. One can recognise an Arf-GAP domain in the interval 467-603 (DDVSTILRGL…ALVIKDESEA (137 aa)). The segment at 482 to 505 (CAECNAPEPDWASLNLGVLLCIQC) adopts a C4-type zinc-finger fold. ANK repeat units follow at residues 682-711 (QGCS…DLNI) and 715-744 (HGRT…RPSI).

In terms of tissue distribution, expressed in roots, hypocotyls, cotyledons, leaf and shoot apical meristems and siliques.

Functionally, probable GTPase-activating protein. This is ADP-ribosylation factor GTPase-activating protein AGD4 (AGD4) from Arabidopsis thaliana (Mouse-ear cress).